Here is a 336-residue protein sequence, read N- to C-terminus: Ribose-phosphate pyrophosphokinase 1 (336 aa).

Mg(2+) contacts are provided by Asp-150, His-152, Asp-161, and Asp-165. A binding of phosphoribosylpyrophosphate region spans residues 236 to 251 (GKVAVMVDDMIDTAGT).

It belongs to the ribose-phosphate pyrophosphokinase family.

The catalysed reaction is D-ribose 5-phosphate + ATP = 5-phospho-alpha-D-ribose 1-diphosphate + AMP + H(+). This chain is Ribose-phosphate pyrophosphokinase 1 (PRS1), found in Spinacia oleracea (Spinach).